A 541-amino-acid chain; its full sequence is Arginine-containing cyclodipeptide synthase avaA (541 aa).

Residues 428 to 432 (DDIAE) carry the Conserved DDXXE motif motif.

This sequence belongs to the arginine-containing cyclodipeptide synthase family.

It catalyses the reaction L-tryptophyl-tRNA(Trp) + L-arginyl-tRNA(Arg) = cyclo(L-arginyl-L-tryptophyl) + tRNA(Trp) + tRNA(Arg) + H(+). It participates in secondary metabolite biosynthesis. Its function is as follows. Arginine-containing cyclodipeptide synthase; part of the cluster that mediates the biosynthesis of a highly modified cyclo-arginine-tryptophan dipeptide (cRW). Within the pathway, avaA acts as the scaffold-generating enzyme and is responsible for formation of the cyclo-Arg-Trp diketopiperazine (cRW) from L-arginyl-tRNA(Arg) + L-tryptophanyl-tRNA(Trp). AvaB then acts as a multifunctional flavoenzyme that is responsible for generating the cyclo-Arg-formylkynurenine DKP, which can be deformylated by avaC. AvaB then catalyzes an additional N-oxidation followed by cyclization and dehydration. The next step is an N-acetylation of the guanidine group catalyzed by the arginine N-acetyltransferase AvaD. The role of the additional enzymes identified within the ava cluster still have to be determined. This is Arginine-containing cyclodipeptide synthase avaA from Aspergillus versicolor.